A 793-amino-acid chain; its full sequence is Kinesin-like protein KIF3C (793 aa).

The region spanning 10 to 365 (ALKVVARCRP…LRFANRAKNI (356 aa)) is the Kinesin motor domain. 97-104 (GQTGTGKT) lines the ATP pocket. Disordered regions lie at residues 251–288 (ERQNKAGPNTAGGASTPSSGGSGGGGGSGGGAGGERPK), 395–423 (EKRGMLGKRPRRKSSRGKKAVSAPPGYPE), and 756–793 (KVRKSRSWCQSPQRPPPSTTHASLASASLRPATVADHE). Over residues 270 to 284 (GGSGGGGGSGGGAGG) the composition is skewed to gly residues. A coiled-coil region spans residues 376–630 (KDTLLREFQE…QNEQTRELKL (255 aa)). Over residues 399-413 (MLGKRPRRKSSRGKK) the composition is skewed to basic residues. Positions 631-793 (KYLIIENFIP…LRPATVADHE (163 aa)) are globular.

It belongs to the TRAFAC class myosin-kinesin ATPase superfamily. Kinesin family. Kinesin II subfamily. As to quaternary structure, heterodimer of KIF3A and KIF3C.

The protein localises to the cytoplasm. The protein resides in the cytoskeleton. In terms of biological role, microtubule-based anterograde translocator for membranous organelles. The polypeptide is Kinesin-like protein KIF3C (KIF3C) (Pongo abelii (Sumatran orangutan)).